A 607-amino-acid chain; its full sequence is Rap1 GTPase-GDP dissociation stimulator 1 (607 aa).

The short motif at 4-13 (LSDTLKKLKI) is the Nuclear export signal (NES) element. ARM repeat units lie at residues 89–131 (GLIS…DQAG) and 170–211 (DSLQ…NLAE). Residues 122-170 (EGRSAVDQAGGAQIVIDHLRSLCSITDPANEKLLTVFCGMLMNYSNEND) form a prevents binding to prenylated RHOA region. Lysine 230 carries the N6-acetyllysine modification. The interacts with polybasic regions in GTPases stretch occupies residues 239 to 255 (DKREMIFEVLAPLAEND). ARM repeat units follow at residues 347–390 (DANC…NLAI), 391–431 (PVIN…MLID), and 479–519 (SKDV…LIAA). The segment at 379-428 (HAALSALRNLAIPVINKAKMLSAGVTEAVLKFLKSEMPPVQFKLLGTLRM) is critical for catalytic activity.

In terms of assembly, interacts with RABL3. Interacts with RHOT1. Interacts with unprenylated RHOA; the interaction is direct. Interacts with RAP1A. Interacts with KRAS. Interacts with RAC1. Interacts with RAP1B. Preferentially interacts with unprenylated GTPases that will become geranylgeranylated. May also interact with prenylated GTPases. As to quaternary structure, interacts with prenylated RHOA; the interaction is direct and in a 1:1 stoichiometry. Interacts with RAP1A. Interacts with KRAS. Interacts with RAC1. Interacts with RAP1B. Preferentially interacts with prenylated GTPases. Post-translationally, forms covalent cross-links mediated by transglutaminase TGM2, between a glutamine and the epsilon-amino group of a lysine residue, forming homopolymers and heteropolymers.

Its subcellular location is the cytoplasm. The protein localises to the cytosol. The protein resides in the endoplasmic reticulum. It is found in the mitochondrion. It localises to the nucleus. Acts as a GEF (guanine nucleotide exchange factor) for the Rho family of small GTP-binding proteins (G proteins) that stimulates the dissociation of GDP to enable subsequent binding of GTP. Additionally, appears to chaperone the processing and/or trafficking of small GTPases containing a C-terminal polybasic region independently of GEF activity. Targets include RAP1A/RAP1B, RHOA, RHOB, RHOC, RAC1 and KRAS. Regulates mitochondrial dynamics by controlling RHOT function to promote mitochondrial fission during high calcium conditions. Able to promote the Ca(2+) release from the endoplasmic reticulum via both inositol trisphosphate (Ins3P) and ryanodine sensitive receptors leading to a enhanced mitochondrial Ca(2+) uptake. Functionally, acts as a GEF (guanine nucleotide exchange factor) for unprenylated RHOA. Chaperones the entry and passage of small GTPases through the prenylation pathway. Recognizes the last amino acid in the GTPase C-terminal CAAX motif with a preference for 'Leu' over 'Met', indicating involvement in the geranylgeranylation pathway. In terms of biological role, acts as a GEF (guanine nucleotide exchange factor) for prenylated RHOA. Acts as a GEF for RHOC. Chaperones the downstream trafficking and/or processing of small newly prenylated GTPases. Escorts RAC1 to the nucleus. In Homo sapiens (Human), this protein is Rap1 GTPase-GDP dissociation stimulator 1.